The primary structure comprises 341 residues: B3 domain-containing transcription factor VRN1 (341 aa).

Residues 5–98 constitute a DNA-binding region (TF-B3 1); the sequence is FFHKLIFSST…AFSVYIFNLS (94 aa). Residues 166-223 are disordered; sequence GPVKAEEPTPTPKIPKKRGRKKKNADPEEINSSAPRDDDPENRSKFYESASARKRTVT. Basic residues predominate over residues 179–188; that stretch reads IPKKRGRKKK. Residues 200–211 show a composition bias toward basic and acidic residues; it reads PRDDDPENRSKF. The TF-B3 2 DNA-binding region spans 244-338; that stretch reads FRVVLRPSYL…VLKVTAFRVN (95 aa).

Expressed in roots and at lower levels in aerial parts.

It is found in the nucleus. Functionally, essential protein. Involved in the regulation of vernalization. Acts as a transcriptional repressor of FLC, a major target of the vernalization pathway. Binds DNA in vitro in a non-sequence-specific manner. This is B3 domain-containing transcription factor VRN1 from Arabidopsis thaliana (Mouse-ear cress).